Reading from the N-terminus, the 441-residue chain is Methionine gamma-lyase (441 aa).

Positions 1-25 (MAHFLETQEPLVFSGKKRNDRDDED) are disordered. Lys248 is subject to N6-(pyridoxal phosphate)lysine.

This sequence belongs to the trans-sulfuration enzymes family. In terms of assembly, homotetramer. The cofactor is pyridoxal 5'-phosphate. Expressed in roots, stems, siliques, leaves, flowers and seeds after imbibition (at protein level). Transcripts accumulate in dry mature seeds, but at protein level, only present upon imbibition.

The protein localises to the cytoplasm. It carries out the reaction L-methionine + H2O = methanethiol + 2-oxobutanoate + NH4(+). Catalyzes the degradation of L-methionine to alpha-ketobutyrate, methanethiol and ammonia. Exhibits a high activity toward L-methionine, L-ethionine, L-homocysteine and seleno-L-methionine, but not L-cysteine. Involved in an alternative cysteine biosynthesis pathway to the reverse trans-sulfuration pathway (methionine-&gt;homocysteine-&gt;cystathionine-&gt;cysteine) in which methanethiol is an intermediate. Also mediates an alternative isoleucine biosynthesis pathway in which 2-ketobutyrate is an intermediate. The polypeptide is Methionine gamma-lyase (MGL) (Arabidopsis thaliana (Mouse-ear cress)).